Here is a 1020-residue protein sequence, read N- to C-terminus: P3N-PIPO polyprotein (1020 aa).

The 144-residue stretch at 165 to 308 (RMSEASLQLF…KKQSNEIIHY (144 aa)) folds into the Peptidase S30 domain. Residues His-216, Asp-225, and Ser-259 each act as for P1 proteinase activity in the active site. The Involved in interaction with stylet and aphid transmission signature appears at 360 to 363 (KITC). The short motif at 618–620 (PTK) is the Involved in virions binding and aphid transmission element. Residues 644-766 (MFIAKAGYCY…DSNMKTYLVG (123 aa)) enclose the Peptidase C6 domain. Residues Cys-652 and His-725 each act as for helper component proteinase activity in the active site.

Belongs to the potyviridae P3N-PIPO polyprotein family. As to quaternary structure, interacts (via PIPO domain) with host PCaP1 protein; this interaction may help to anchor the movement complex to the plasma membrane from which the complex could move to the plasmodesmata. Potyviral RNA is expressed as two polyproteins which undergo post-translational proteolytic processing. Genome polyprotein is processed by NIa-pro, P1 and HC-pro proteinases resulting in the production of at least ten individual proteins. P3N-PIPO is cleaved by P1 and HC-pro proteinases resulting in the production of three individual proteins. The P1 proteinase and the HC-pro cleave only their respective C-termini autocatalytically.

It is found in the host cell junction. The protein resides in the host plasmodesma. The catalysed reaction is Hydrolyzes a Gly-|-Gly bond at its own C-terminus, commonly in the sequence -Tyr-Xaa-Val-Gly-|-Gly, in the processing of the potyviral polyprotein.. Its function is as follows. Required for aphid transmission and also has proteolytic activity. Only cleaves a Gly-Gly dipeptide at its own C-terminus. Interacts with virions and aphid stylets. Acts as a suppressor of RNA-mediated gene silencing, also known as post-transcriptional gene silencing (PTGS), a mechanism of plant viral defense that limits the accumulation of viral RNAs. May have RNA-binding activity. Allows efficient cell to cell propagation, by bypassing the host cell wall barrier. Transports viral genome to neighboring plant cells directly through plasmosdesmata, without any budding. The chain is P3N-PIPO polyprotein from Plum pox potyvirus (isolate NAT) (PPV).